The primary structure comprises 59 residues: Large ribosomal subunit protein uL30 (59 aa).

This sequence belongs to the universal ribosomal protein uL30 family. As to quaternary structure, part of the 50S ribosomal subunit.

This Enterococcus faecalis (strain ATCC 700802 / V583) protein is Large ribosomal subunit protein uL30.